A 139-amino-acid polypeptide reads, in one-letter code: Non-structural protein 1 (139 aa).

Positions 136-139 match the DLNP; interaction with MAP1B motif; the sequence is DLNS.

It belongs to the pneumovirus non-structural protein 1 family. In terms of assembly, monomer. Homomultimer. Heteromultimer with NS2. Interacts with the matrix protein M. Interacts with host ELOC and CUL2; this interaction allows NS1 to form an active E3 ligase with ELOC and CUL2. Interacts with host IRF3; this interaction leads to the disrupted association of IRF3 with CREBBP and thus reduced binding of IRF3 to the IFN-beta promoter. Interacts with host MAVS; this interaction prevents MAVS binding to RIGI and inhibits signaling pathway leading to interferon production. Interacts with host MAP1B/microtubule-associated protein 1B. Interacts with host TRIM25 (via SPRY domain); this interaction suppresses RIGI ubiquitination and results in decreased interaction between RIGI and MAVS.

It is found in the host cytoplasm. The protein localises to the host mitochondrion. Its subcellular location is the host nucleus. Plays a major role in antagonizing the type I IFN-mediated antiviral response by degrading or inhibiting multiple cellular factors required for either IFN induction or response pathways. Acts cooperatively with NS2 to repress activation and nuclear translocation of host IFN-regulatory factor IRF3. Also disrupts the association of IRF3 with CREBBP. Interacts with host mitochondrial-associated membrane (MAM) MAVS and prevents the interaction with RIGI. Interacts with TRIM25 to suppress TRIM25-mediated RIGI ubiquitination and thereby RIGI-MAVS interaction. Together with NS2, participates in the proteasomal degradation of host STAT2, IRF3, IRF7, TBK1 and RIGI through a NS-degradasome involving CUL2 and Elongin-C. The degradasome requires an intact mitochondrial MAVS. Decreases the levels of host TRAF3 and IKBKE/IKK-epsilon. As functions other than disruptions of the type I IFN-mediated antiviral signaling pathways, induces host SOCS1 and SOCS3 expression. Suppresses premature apoptosis by an NF-kappa-B-dependent, interferon-independent mechanism and thus facilitates virus growth. Additionally, NS1 may serve some inhibitory role in viral transcription and RNA replication. Suppresses proliferation and activation of host CD103+ CD8+ cytotoxic T-lymphocytes and Th17 helper T-lymphocytes. The protein is Non-structural protein 1 (1C) of Homo sapiens (Human).